Here is a 371-residue protein sequence, read N- to C-terminus: Ferrochelatase (371 aa).

Fe cation-binding residues include His-218 and Glu-299.

This sequence belongs to the ferrochelatase family.

Its subcellular location is the cytoplasm. It catalyses the reaction heme b + 2 H(+) = protoporphyrin IX + Fe(2+). Its pathway is porphyrin-containing compound metabolism; protoheme biosynthesis; protoheme from protoporphyrin-IX: step 1/1. Functionally, catalyzes the ferrous insertion into protoporphyrin IX. This chain is Ferrochelatase, found in Cupriavidus pinatubonensis (strain JMP 134 / LMG 1197) (Cupriavidus necator (strain JMP 134)).